A 159-amino-acid polypeptide reads, in one-letter code: Putative 4-hydroxy-4-methyl-2-oxoglutarate aldolase (159 aa).

Residues 74–77 (GDNL) and Arg96 contribute to the substrate site. Asp97 serves as a coordination point for a divalent metal cation.

Belongs to the class II aldolase/RraA-like family. As to quaternary structure, homotrimer. Requires a divalent metal cation as cofactor.

It carries out the reaction 4-hydroxy-4-methyl-2-oxoglutarate = 2 pyruvate. The catalysed reaction is oxaloacetate + H(+) = pyruvate + CO2. Functionally, catalyzes the aldol cleavage of 4-hydroxy-4-methyl-2-oxoglutarate (HMG) into 2 molecules of pyruvate. Also contains a secondary oxaloacetate (OAA) decarboxylase activity due to the common pyruvate enolate transition state formed following C-C bond cleavage in the retro-aldol and decarboxylation reactions. This chain is Putative 4-hydroxy-4-methyl-2-oxoglutarate aldolase, found in Bacillus anthracis.